Here is a 227-residue protein sequence, read N- to C-terminus: Cytochrome c oxidase subunit 2 (227 aa).

Residues 1–14 (MAYPFELGFQDATS) lie on the Mitochondrial intermembrane side of the membrane. Residues 15–45 (PIMEELLHFHDHTLMIVFLISSLVLYIISLM) traverse the membrane as a helical segment. Residues 46 to 59 (LTTKLTHTSTMDAQ) are Mitochondrial matrix-facing. Residues 60-87 (EVETIWTILPAIILILIALPSLRILYMM) form a helical membrane-spanning segment. Residues 88–227 (DEINDPSLTV…HFENWSSSML (140 aa)) lie on the Mitochondrial intermembrane side of the membrane. Cu cation is bound by residues H161, C196, E198, C200, H204, and M207. E198 contributes to the Mg(2+) binding site.

It belongs to the cytochrome c oxidase subunit 2 family. As to quaternary structure, component of the cytochrome c oxidase (complex IV, CIV), a multisubunit enzyme composed of 14 subunits. The complex is composed of a catalytic core of 3 subunits MT-CO1, MT-CO2 and MT-CO3, encoded in the mitochondrial DNA, and 11 supernumerary subunits COX4I, COX5A, COX5B, COX6A, COX6B, COX6C, COX7A, COX7B, COX7C, COX8 and NDUFA4, which are encoded in the nuclear genome. The complex exists as a monomer or a dimer and forms supercomplexes (SCs) in the inner mitochondrial membrane with NADH-ubiquinone oxidoreductase (complex I, CI) and ubiquinol-cytochrome c oxidoreductase (cytochrome b-c1 complex, complex III, CIII), resulting in different assemblies (supercomplex SCI(1)III(2)IV(1) and megacomplex MCI(2)III(2)IV(2)). Found in a complex with TMEM177, COA6, COX18, COX20, SCO1 and SCO2. Interacts with TMEM177 in a COX20-dependent manner. Interacts with COX20. Interacts with COX16. It depends on Cu cation as a cofactor.

It localises to the mitochondrion inner membrane. It carries out the reaction 4 Fe(II)-[cytochrome c] + O2 + 8 H(+)(in) = 4 Fe(III)-[cytochrome c] + 2 H2O + 4 H(+)(out). Component of the cytochrome c oxidase, the last enzyme in the mitochondrial electron transport chain which drives oxidative phosphorylation. The respiratory chain contains 3 multisubunit complexes succinate dehydrogenase (complex II, CII), ubiquinol-cytochrome c oxidoreductase (cytochrome b-c1 complex, complex III, CIII) and cytochrome c oxidase (complex IV, CIV), that cooperate to transfer electrons derived from NADH and succinate to molecular oxygen, creating an electrochemical gradient over the inner membrane that drives transmembrane transport and the ATP synthase. Cytochrome c oxidase is the component of the respiratory chain that catalyzes the reduction of oxygen to water. Electrons originating from reduced cytochrome c in the intermembrane space (IMS) are transferred via the dinuclear copper A center (CU(A)) of subunit 2 and heme A of subunit 1 to the active site in subunit 1, a binuclear center (BNC) formed by heme A3 and copper B (CU(B)). The BNC reduces molecular oxygen to 2 water molecules using 4 electrons from cytochrome c in the IMS and 4 protons from the mitochondrial matrix. The sequence is that of Cytochrome c oxidase subunit 2 (MT-CO2) from Neotamias bulleri (Buller's chipmunk).